We begin with the raw amino-acid sequence, 97 residues long: Large ribosomal subunit protein bL31 (97 aa).

Positions asparagine 75–leucine 97 are disordered. The span at lysine 84 to leucine 97 shows a compositional bias: basic and acidic residues.

It belongs to the bacterial ribosomal protein bL31 family. Type A subfamily. In terms of assembly, part of the 50S ribosomal subunit.

In terms of biological role, binds the 23S rRNA. This is Large ribosomal subunit protein bL31 from Mycoplasma genitalium (strain ATCC 33530 / DSM 19775 / NCTC 10195 / G37) (Mycoplasmoides genitalium).